The sequence spans 475 residues: ATP synthase subunit beta, chloroplastic (475 aa).

156–163 (GGAGVGKT) contributes to the ATP binding site.

Belongs to the ATPase alpha/beta chains family. F-type ATPases have 2 components, CF(1) - the catalytic core - and CF(0) - the membrane proton channel. CF(1) has five subunits: alpha(3), beta(3), gamma(1), delta(1), epsilon(1). CF(0) has four main subunits: a(1), b(1), b'(1) and c(9-12).

It localises to the plastid. The protein localises to the chloroplast thylakoid membrane. The catalysed reaction is ATP + H2O + 4 H(+)(in) = ADP + phosphate + 5 H(+)(out). In terms of biological role, produces ATP from ADP in the presence of a proton gradient across the membrane. The catalytic sites are hosted primarily by the beta subunits. In Gracilaria tenuistipitata var. liui (Red alga), this protein is ATP synthase subunit beta, chloroplastic.